The sequence spans 732 residues: Copper-transporting ATPase (732 aa).

The Cytoplasmic portion of the chain corresponds to 1–88 (MTKAQFYIEG…NPSFLTPNVK (88 aa)). Residues 2–68 (TKAQFYIEGM…QIEKLGYQPR (67 aa)) enclose the HMA domain. Cu(+) is bound by residues C13 and C16. A helical membrane pass occupies residues 89-109 (LALVLLGTLGVLALSMFAPLL). Residues 110-122 (PLPSFLKNPFING) lie on the Extracellular side of the membrane. The chain crosses the membrane as a helical span at residues 123–142 (IVQLVLSLMVMHMGRNFYVH). The Cytoplasmic portion of the chain corresponds to 143 to 149 (GFKALWA). The helical transmembrane segment at 150 to 170 (RQPNMDSLIALGTSAALLYSL) threads the bilayer. The Extracellular portion of the chain corresponds to 171-187 (VLLFRAYTHAPIEGYYF). The chain crosses the membrane as a helical span at residues 188-208 (ESVCVILLFVMAGKRVEENSK). Topologically, residues 209–336 (DKALEAMQSL…KAPIARLADK (128 aa)) are cytoplasmic. The helical transmembrane segment at 337-359 (VAGVFVPIVIGIASIAFLVWLVL) threads the bilayer. Topologically, residues 360-365 (GDFTRA) are extracellular. A helical transmembrane segment spans residues 366–383 (LEVFIAILVISCPCALGL). The Cytoplasmic portion of the chain corresponds to 384-663 (ATPMALLVAQ…KLSALTIANI (280 aa)). D421 functions as the 4-aspartylphosphate intermediate in the catalytic mechanism. 2 residues coordinate Mg(2+): D609 and D613. Residues 664–683 (KQNLFWAFCYNSIAIPLACG) traverse the membrane as a helical segment. Residues 684-694 (VAYKLGIMFNP) are Extracellular-facing. Residues 695–713 (MLASLAMSLSSVSVVLNAQ) form a helical membrane-spanning segment. Residues 714–732 (RLRGAHFKIRGSHENRHSS) are Cytoplasmic-facing.

This sequence belongs to the cation transport ATPase (P-type) (TC 3.A.3) family. Type IB subfamily.

It localises to the cell membrane. The catalysed reaction is Cu(+)(in) + ATP + H2O = Cu(+)(out) + ADP + phosphate + H(+). Its function is as follows. Probably involved in copper export. The chain is Copper-transporting ATPase (copA) from Helicobacter felis (strain ATCC 49179 / CCUG 28539 / NCTC 12436 / CS1).